Consider the following 185-residue polypeptide: Ribosome maturation factor RimM (185 aa).

The 75-residue stretch at 103-177 (SEEYYWYEIL…SIIVKKIEWY (75 aa)) folds into the PRC barrel domain.

This sequence belongs to the RimM family. Binds ribosomal protein uS19.

The protein localises to the cytoplasm. Its function is as follows. An accessory protein needed during the final step in the assembly of 30S ribosomal subunit, possibly for assembly of the head region. Essential for efficient processing of 16S rRNA. May be needed both before and after RbfA during the maturation of 16S rRNA. It has affinity for free ribosomal 30S subunits but not for 70S ribosomes. The polypeptide is Ribosome maturation factor RimM (Petrotoga mobilis (strain DSM 10674 / SJ95)).